The chain runs to 96 residues: Large ribosomal subunit protein bL27 (96 aa).

Residues 13–33 (KGGGSTANGRNSAGRRLGAKA) are disordered.

It belongs to the bacterial ribosomal protein bL27 family.

The sequence is that of Large ribosomal subunit protein bL27 from Lactobacillus acidophilus (strain ATCC 700396 / NCK56 / N2 / NCFM).